Consider the following 1718-residue polypeptide: PR domain zinc finger protein 2 (1718 aa).

The SET domain occupies 28–141 (EEVRLFPSAV…PGEELLVWYN (114 aa)). Residues 155–335 (ERASARSKRS…TSEETLEDCS (181 aa)) are disordered. A compositionally biased stretch (basic residues) spans 159 to 173 (ARSKRSSPKSRKGKK). Over residues 189–202 (QLKTSEPDFTSANM) the composition is skewed to polar residues. A compositionally biased stretch (basic and acidic residues) spans 204–216 (DSAEGPKEDEEKP). The span at 265-297 (DLGEEEEEEEEEDEEEEEDDDDDELEDEGEEEA) shows a compositional bias: acidic residues. A retinoblastoma protein binding region spans residues 294–316 (EEEASMPNENSVKEPEIRCDEKP). A compositionally biased stretch (basic and acidic residues) spans 304 to 327 (SVKEPEIRCDEKPEDLLEEPKTTS). Residue K347 forms a Glycyl lysine isopeptide (Lys-Gly) (interchain with G-Cter in SUMO2) linkage. C2H2-type zinc fingers lie at residues 360–382 (FPCQ…MHIH) and 390–412 (FKCK…ERRH). The segment at 405-457 (RRRHERRHEAGLKRKPSQTLQPSEDLADGKASGENVASKDDSSPPSLGPDCLI) is disordered. Position 421 is a phosphoserine (S421). The C2H2-type 3 zinc-finger motif lies at 483–506 (HPCKYCKKVFGTHTNMRRHQRRVH). Disordered regions lie at residues 513–550 (KGVR…EGEA) and 622–660 (EDLP…DPMV). Residue S643 is modified to Phosphoserine. Residues K651, K690, and K692 each participate in a glycyl lysine isopeptide (Lys-Gly) (interchain with G-Cter in SUMO2) cross-link. The interval 729 to 797 (TSSRFKRRTS…GRDERETVSP (69 aa)) is disordered. Residues 738-748 (SSPPSSPQHSP) show a composition bias toward low complexity. Residue S743 is modified to Phosphoserine. A Glycyl lysine isopeptide (Lys-Gly) (interchain with G-Cter in SUMO2) cross-link involves residue K774. S781, S785, and S796 each carry phosphoserine. Glycyl lysine isopeptide (Lys-Gly) (interchain with G-Cter in SUMO2) cross-links involve residues K866 and K879. The interval 903 to 1083 (VENPADGTRS…SPPPLSAISS (181 aa)) is disordered. Residues 951–969 (LQTPSLSSGQLPPLLIPTD) show a composition bias toward low complexity. Short sequence motifs (SH3-binding) lie at residues 970-979 (PSSPPPCPPV) and 985-998 (PPPP…LPAP). Pro residues predominate over residues 970-997 (PSSPPPCPPVLTVATPPPPLLPTVPLPA). Positions 1018-1027 (SPLPILSPTV) are enriched in low complexity. Positions 1028–1038 (SPSPSPIPPVE) are enriched in pro residues. Residues 1028 to 1052 (SPSPSPIPPVEPLMSAASPGPPTLS) carry the SH3-binding motif. Over residues 1042–1072 (SAASPGPPTLSSSSSSSSSSSSFSSSSSSSS) the composition is skewed to low complexity. 3 consecutive C2H2-type zinc fingers follow at residues 1134 to 1156 (FVCN…LSIH), 1162 to 1185 (FKCE…FLLH), and 1191 to 1214 (FVCS…RDLH). Residues K1147 and K1151 each participate in a glycyl lysine isopeptide (Lys-Gly) (interchain with G-Cter in SUMO2) cross-link. Positions 1244-1265 (HMQSLPEDPLETSKEEEELNDS) are disordered. Residues 1251–1265 (DPLETSKEEEELNDS) show a composition bias toward acidic residues. Residues K1257 and K1281 each participate in a glycyl lysine isopeptide (Lys-Gly) (interchain with G-Cter in SUMO2) cross-link. Residues 1333 to 1355 (IRCTKCGKGVDNMPELHKHILAC) form a C2H2-type 7; atypical zinc finger. The C2H2-type 8; atypical zinc-finger motif lies at 1455 to 1478 (HICPYCNREFTYIGSLNKHAAFSC). Disordered regions lie at residues 1478-1576 (CPKK…LRNS), 1589-1612 (GKKP…RSLH), and 1625-1652 (KSTL…VTRS). Basic residues predominate over residues 1486–1498 (PKKKVSHSSKKGG). A compositionally biased stretch (low complexity) spans 1499–1511 (HSSPASSDKNSNS). 2 stretches are compositionally biased toward polar residues: residues 1525 to 1556 (QSMQ…SKQN) and 1599 to 1608 (HSAQLSSKTS). Positions 1635–1645 (DRFNIKSRERS) are enriched in basic and acidic residues.

It belongs to the class V-like SAM-binding methyltransferase superfamily. In terms of assembly, binds to the retinoblastoma protein (RB). Interacts with GATA3. As to expression, highly expressed in retinoblastoma cell lines and in brain tumors. Also expressed in a number of other cell lines and in brain, heart, skeletal muscle, liver and spleen. Isoform 1 is expressed in testis at much higher level than isoform 3.

The protein localises to the nucleus. It carries out the reaction L-lysyl(9)-[histone H3] + 3 S-adenosyl-L-methionine = N(6),N(6),N(6)-trimethyl-L-lysyl(9)-[histone H3] + 3 S-adenosyl-L-homocysteine + 3 H(+). In terms of biological role, S-adenosyl-L-methionine-dependent histone methyltransferase that specifically methylates 'Lys-9' of histone H3. May function as a DNA-binding transcription factor. Binds to the macrophage-specific TPA-responsive element (MTE) of the HMOX1 (heme oxygenase 1) gene and may act as a transcriptional activator of this gene. This chain is PR domain zinc finger protein 2 (PRDM2), found in Homo sapiens (Human).